Consider the following 757-residue polypeptide: Mitofusin-2 (757 aa).

At 1–604 the chain is on the cytoplasmic side; that stretch reads MSLLFSRCNS…TQEELMVSMV (604 aa). Residues 30 to 94 are part of a helix bundle domain, formed by helices from N-terminal and C-terminal regions; the sequence is KHFVTAKKKI…VRGISEVLAR (65 aa). In terms of domain architecture, Dynamin-type G spans 93-342; the sequence is ARRHMKVAFF…VRMFEFQNFE (250 aa). The G1 motif stretch occupies residues 103–110; the sequence is GRTSNGKS. GTP is bound at residue 106–111; sequence SNGKST. Thr-111 bears the Phosphothreonine; by PINK1 mark. A G2 motif region spans residues 129 to 130; it reads TT. Positions 199-202 are G3 motif; it reads DSPG. 258-261 provides a ligand contact to GTP; that stretch reads NRWD. Residues 258–261 form a G4 motif region; the sequence is NRWD. Residue Glu-288 is a region of interest, G5 motif. GTP contacts are provided by Ser-305 and Lys-307. The interval 359–385 is part of a helix bundle domain, formed by helices from N-terminal and C-terminal regions; that stretch reads EQHTVRAKQIAEAVRLIMDSLHIAAQE. Residues 406-435 adopt a coiled-coil conformation; the sequence is KQLELLAQDYKLRIKQMTEEVERQVSTAMA. The residue at position 442 (Ser-442) is a Phosphoserine; by PINK1. A helical transmembrane segment spans residues 605–625; sequence TGLASLTSRTSMGILVVGGVV. Trp-626 is a topological domain (mitochondrial intermembrane). Residues 627–647 traverse the membrane as a helical segment; that stretch reads KAVGWRLIALSFGLYGLLYVY. Topologically, residues 648–757 are cytoplasmic; it reads ERLTWTTRAK…FIHQYLQPSR (110 aa). A coiled-coil region spans residues 696–738; that stretch reads FAHLCQQVDITRDNLEQEIAAMNKKVEALDSLQSKAKLLRNKA. The interval 722-753 is part of a helix bundle domain, formed by helices from N-terminal and C-terminal regions; sequence EALDSLQSKAKLLRNKAGWLDSELNMFIHQYL.

Belongs to the TRAFAC class dynamin-like GTPase superfamily. Dynamin/Fzo/YdjA family. Mitofusin subfamily. As to quaternary structure, forms homomultimers and heteromultimers with MFN1. Oligomerization is essential for mitochondrion fusion. Interacts with VAT1. Interacts with STOML2; may form heterooligomers. Interacts (phosphorylated) with PRKN. Interacts with EIF2AK3. Interacts with THG1L; THG1L probably functions as a guanyl-nucleotide exchange factor/GEF, activating MFN2. Post-translationally, phosphorylated by PINK1. Ubiquitinated by non-degradative ubiquitin by PRKN, promoting mitochondrial fusion; deubiquitination by USP30 inhibits mitochondrial fusion. Ubiquitinated by HUWE1 when dietary stearate (C18:0) levels are low; ubiquitination inhibits mitochondrial fusion. Ubiquitous. In brain, it is more expressed than MFN1, while it is expressed at a weaker level than MFN1 in heart and testis. Expressed at high level in elongating spermatids of seminiferous tubules. Expression is markedly down-regulated in highly proliferative vascular smooth muscle cells (VSMCs) from the genetic hypertensive animal model SHR, as well as in balloon-injured Wistar Kyoto arteries.

It localises to the mitochondrion outer membrane. It catalyses the reaction GTP + H2O = GDP + phosphate + H(+). Mitochondrial outer membrane GTPase that mediates mitochondrial clustering and fusion. Mitochondria are highly dynamic organelles, and their morphology is determined by the equilibrium between mitochondrial fusion and fission events. Overexpression induces the formation of mitochondrial networks. Membrane clustering requires GTPase activity and may involve a major rearrangement of the coiled coil domains. Plays a central role in mitochondrial metabolism and may be associated with obesity and/or apoptosis processes. Plays an important role in the regulation of vascular smooth muscle cell proliferation. Involved in the clearance of damaged mitochondria via selective autophagy (mitophagy). Is required for PRKN recruitment to dysfunctional mitochondria. Involved in the control of unfolded protein response (UPR) upon ER stress including activation of apoptosis and autophagy during ER stress. Acts as an upstream regulator of EIF2AK3 and suppresses EIF2AK3 activation under basal conditions. This chain is Mitofusin-2 (Mfn2), found in Rattus norvegicus (Rat).